The following is a 195-amino-acid chain: Large ribosomal subunit protein uL5 (195 aa).

It belongs to the universal ribosomal protein uL5 family. In terms of assembly, part of the 50S ribosomal subunit; part of the 5S rRNA/L5/L18/L25 subcomplex. Contacts the 5S rRNA and the P site tRNA. Forms a bridge to the 30S subunit in the 70S ribosome.

Its function is as follows. This is one of the proteins that bind and probably mediate the attachment of the 5S RNA into the large ribosomal subunit, where it forms part of the central protuberance. In the 70S ribosome it contacts protein S13 of the 30S subunit (bridge B1b), connecting the 2 subunits; this bridge is implicated in subunit movement. Contacts the P site tRNA; the 5S rRNA and some of its associated proteins might help stabilize positioning of ribosome-bound tRNAs. The chain is Large ribosomal subunit protein uL5 from Chlorobium phaeobacteroides (strain DSM 266 / SMG 266 / 2430).